The following is a 524-amino-acid chain: Nucleobase-ascorbate transporter 2 (524 aa).

12 helical membrane passes run 41-61 (YILALGTAVMIPSILVPMMGG), 69-89 (VVQTLLFLQGVNTLLQTLFGT), 91-111 (LPTVIGGSYAFMVPIISIIHD), 133-153 (GAIIVASSVQIILGFSQMWAI), 155-175 (SRFFSPIGMVPVIALTGFGLF), 179-199 (FPVVGNCVEIGLPMLILFVIF), 217-237 (FALIIALIIVWAYAHVLTASG), 282-302 (AFAMMAAVLVSLIESTGAFKA), 359-379 (RVIQISAGFMIFFSMLGKFGA), 380-400 (LFASIPFTIFAAVYCVLFGLV), 419-439 (LFIVGVSLFLGLSIPEYFRDF), and 457-477 (DFLNTIFLSSPMVALMVAVFL).

This sequence belongs to the nucleobase:cation symporter-2 (NCS2) (TC 2.A.40) family. Expressed in cotyledons 10 days after imbibition (DAI). Expressed in the minor and major veins of cotyledons and leaves, in the shoot apex and pedicels. Expressed in the root meristems, root tips and lateral root primordia.

Its subcellular location is the membrane. This is Nucleobase-ascorbate transporter 2 (NAT2) from Arabidopsis thaliana (Mouse-ear cress).